Consider the following 166-residue polypeptide: Large ribosomal subunit protein uL10 (166 aa).

The protein belongs to the universal ribosomal protein uL10 family. Part of the ribosomal stalk of the 50S ribosomal subunit. The N-terminus interacts with L11 and the large rRNA to form the base of the stalk. The C-terminus forms an elongated spine to which L12 dimers bind in a sequential fashion forming a multimeric L10(L12)X complex.

Its function is as follows. Forms part of the ribosomal stalk, playing a central role in the interaction of the ribosome with GTP-bound translation factors. The sequence is that of Large ribosomal subunit protein uL10 from Azotobacter vinelandii (strain DJ / ATCC BAA-1303).